The chain runs to 73 residues: Exodeoxyribonuclease 7 small subunit (73 aa).

Belongs to the XseB family. In terms of assembly, heterooligomer composed of large and small subunits.

The protein localises to the cytoplasm. It catalyses the reaction Exonucleolytic cleavage in either 5'- to 3'- or 3'- to 5'-direction to yield nucleoside 5'-phosphates.. Functionally, bidirectionally degrades single-stranded DNA into large acid-insoluble oligonucleotides, which are then degraded further into small acid-soluble oligonucleotides. The polypeptide is Exodeoxyribonuclease 7 small subunit (Clostridium novyi (strain NT)).